The primary structure comprises 345 residues: Phosphoribosylformylglycinamidine cyclo-ligase (345 aa).

It belongs to the AIR synthase family.

It is found in the cytoplasm. The catalysed reaction is 2-formamido-N(1)-(5-O-phospho-beta-D-ribosyl)acetamidine + ATP = 5-amino-1-(5-phospho-beta-D-ribosyl)imidazole + ADP + phosphate + H(+). Its pathway is purine metabolism; IMP biosynthesis via de novo pathway; 5-amino-1-(5-phospho-D-ribosyl)imidazole from N(2)-formyl-N(1)-(5-phospho-D-ribosyl)glycinamide: step 2/2. The polypeptide is Phosphoribosylformylglycinamidine cyclo-ligase (Shewanella baltica (strain OS223)).